A 64-amino-acid polypeptide reads, in one-letter code: Large ribosomal subunit protein bL35 (64 aa).

It belongs to the bacterial ribosomal protein bL35 family.

This Acidothermus cellulolyticus (strain ATCC 43068 / DSM 8971 / 11B) protein is Large ribosomal subunit protein bL35.